A 238-amino-acid polypeptide reads, in one-letter code: Ion-translocating oxidoreductase complex subunit E (238 aa).

6 consecutive transmembrane segments (helical) span residues 24–44 (ALWQ…TLAV), 52–72 (LGMG…ISSM), 84–104 (VMIG…NAWM), 106–126 (ELYK…AVLG), 141–161 (ILDG…IGGI), and 195–215 (GILL…LLAA).

It belongs to the NqrDE/RnfAE family. In terms of assembly, the complex is composed of six subunits: RnfA, RnfB, RnfC, RnfD, RnfE and RnfG.

The protein resides in the cell inner membrane. Functionally, part of a membrane-bound complex that couples electron transfer with translocation of ions across the membrane. The polypeptide is Ion-translocating oxidoreductase complex subunit E (Azotobacter vinelandii (strain DJ / ATCC BAA-1303)).